We begin with the raw amino-acid sequence, 465 residues long: Cysteine--tRNA ligase (465 aa).

Cys-29 contributes to the Zn(2+) binding site. The short motif at 31–41 (PTVYNYIHIGN) is the 'HIGH' region element. Cys-209, His-234, and Glu-238 together coordinate Zn(2+). The short motif at 266–270 (KMSKS) is the 'KMSKS' region element. Lys-269 contributes to the ATP binding site. A Phosphoserine modification is found at Ser-270.

It belongs to the class-I aminoacyl-tRNA synthetase family. Monomer. The cofactor is Zn(2+).

The protein resides in the cytoplasm. It carries out the reaction tRNA(Cys) + L-cysteine + ATP = L-cysteinyl-tRNA(Cys) + AMP + diphosphate. The chain is Cysteine--tRNA ligase from Anoxybacillus flavithermus (strain DSM 21510 / WK1).